We begin with the raw amino-acid sequence, 617 residues long: Neurosecretory protein VGF (617 aa).

Positions 1–23 (MKTFTLPASVLFCFLLLIRGLGA) are cleaved as a signal peptide. Disordered regions lie at residues 29 to 75 (SDVY…GELF), 94 to 113 (PASP…EEAA), 121 to 157 (VRSQ…DRSE), and 169 to 192 (LRDF…ETRT). Residues 48 to 64 (AVSRPKDDSVPEVRAAR) are compositionally biased toward basic and acidic residues. Residues 148-157 (NDPEADDRSE) are compositionally biased toward acidic residues. Q180 is modified (pyrrolidone carboxylic acid). Positions 182 to 192 (ETAAAETETRT) are enriched in low complexity. Q313 bears the Pyrrolidone carboxylic acid mark. The interval 348 to 603 (DLGGRGLQET…AEERRLQEQE (256 aa)) is disordered. A compositionally biased stretch (acidic residues) spans 378-397 (EDEVGEEDEEAAEAEAEAEE). The segment covering 418–436 (AEDKRSQEEAPGHRRKDAE) has biased composition (basic and acidic residues). At S423 the chain carries Phosphoserine. Over residues 437–452 (GTEEGGEEDDDDEEMD) the composition is skewed to acidic residues. The segment covering 491-501 (PPEPVPPPRAA) has biased composition (pro residues). Residues 577–601 (HHPDLEAQARRAQEEADAEERRLQE) show a composition bias toward basic and acidic residues.

As to quaternary structure, interacts with HSPA8 on cell membrane. Interacts with C3AR1. Interacts with C1QBP. In terms of processing, multiple peptides are derived from VGF, with activities in synaptic plasticity, antidepression, penile erection, autonomic activation, and increases in energy expenditure. As to expression, central and peripheral nervous systems, synthesized exclusively in neuronal and neuroendocrine cells. VGF and several of the derived peptides are present in the brain.

It is found in the secreted. The protein resides in the cytoplasmic vesicle. Its subcellular location is the secretory vesicle. In terms of biological role, secreted polyprotein that is packaged and proteolytically processed by prohormone convertases PCSK1 and PCSK2 in a cell-type-specific manner. VGF and peptides derived from its processing play many roles in neurogenesis and neuroplasticity associated with learning, memory, depression and chronic pain. Plays a role in the control of body fluid homeostasis by regulating vasopressin release. Suppresses presynaptic glutamatergic neurons connected to vasopressin neurons. Functionally, plays a role in the control of body fluid homeostasis by regulating vasopressin release. Activates GABAergic interneurons which are inhibitory neurons of the nervous system and thereby suppresses presynaptic glutamatergic neurons. Also stimulates feeding behavior in an orexin-dependent manner in the hypothalamus. Functions as a positive regulator for the activation of orexin neurons resulting in elevated gastric acid secretion and gastric emptying. Its function is as follows. Secreted multifunctional neuropeptide that binds to different cell receptors and thereby plays multiple physiological roles including modulation of energy expenditure, pain, response to stress, gastric regulation, glucose homeostasis as well as lipolysis. Activates the G-protein-coupled receptor C3AR1 via a folding-upon-binding mechanism leading to enhanced lipolysis in adipocytes. Interacts with C1QBP receptor in macrophages and microglia causing increased levels of intracellular calcium and hypersensitivity. In terms of biological role, plays a role in the regulation of memory formation and depression-related behaviors potentially by influencing synaptic plasticity and neurogenesis. Induces acute and transient activation of the NTRK2/TRKB receptor and subsequent CREB phosphorylation. Also induces insulin secretion in insulinoma cells by increasing intracellular calcium mobilization. This is Neurosecretory protein VGF (Vgf) from Rattus norvegicus (Rat).